Consider the following 362-residue polypeptide: Phosphoserine aminotransferase (362 aa).

Arginine 43 lines the L-glutamate pocket. Pyridoxal 5'-phosphate-binding positions include 77 to 78 (AT), tryptophan 103, threonine 153, aspartate 173, and glutamine 196. N6-(pyridoxal phosphate)lysine is present on lysine 197. 238-239 (NT) provides a ligand contact to pyridoxal 5'-phosphate.

It belongs to the class-V pyridoxal-phosphate-dependent aminotransferase family. SerC subfamily. In terms of assembly, homodimer. Requires pyridoxal 5'-phosphate as cofactor.

It localises to the cytoplasm. The enzyme catalyses O-phospho-L-serine + 2-oxoglutarate = 3-phosphooxypyruvate + L-glutamate. It carries out the reaction 4-(phosphooxy)-L-threonine + 2-oxoglutarate = (R)-3-hydroxy-2-oxo-4-phosphooxybutanoate + L-glutamate. It functions in the pathway amino-acid biosynthesis; L-serine biosynthesis; L-serine from 3-phospho-D-glycerate: step 2/3. The protein operates within cofactor biosynthesis; pyridoxine 5'-phosphate biosynthesis; pyridoxine 5'-phosphate from D-erythrose 4-phosphate: step 3/5. In terms of biological role, catalyzes the reversible conversion of 3-phosphohydroxypyruvate to phosphoserine and of 3-hydroxy-2-oxo-4-phosphonooxybutanoate to phosphohydroxythreonine. This chain is Phosphoserine aminotransferase, found in Acidithiobacillus ferrooxidans (strain ATCC 23270 / DSM 14882 / CIP 104768 / NCIMB 8455) (Ferrobacillus ferrooxidans (strain ATCC 23270)).